Here is a 554-residue protein sequence, read N- to C-terminus: Solute carrier family 22 member 2 (554 aa).

Residues 1–21 (MPTVDDILEQVGHFHFFQKQT) are Cytoplasmic-facing. A helical membrane pass occupies residues 22–42 (FFLLALISAAFTPIYVGIVFL). Residues 43–149 (GFTPDHRCRS…LVCARSWMLD (107 aa)) lie on the Extracellular side of the membrane. A glycan (N-linked (GlcNAc...) asparagine) is linked at asparagine 71. A helical transmembrane segment spans residues 150–170 (LFQSAVNIGFFIGSVGIGYLA). The Cytoplasmic portion of the chain corresponds to 171–176 (DRFGRK). The chain crosses the membrane as a helical span at residues 177–197 (LCLLVTILINAAAGVLMAVSP). An N-linked (GlcNAc...) asparagine glycan is attached at asparagine 198. The Extracellular portion of the chain corresponds to 198–209 (NYTWMLIFRLIQ). The helical transmembrane segment at 210–230 (GLVSKAGWLIGYILITEFVGL) threads the bilayer. Residues 231-237 (NYRRTVG) are Cytoplasmic-facing. Residues 238–258 (ILYQVAFTVGLLVLAGVAYAL) form a helical membrane-spanning segment. The Extracellular portion of the chain corresponds to 259–262 (PRWR). The helical transmembrane segment at 263–283 (WLQLTVTLPYFCFLLYYWCIP) threads the bilayer. The Proline-rich sequence motif lies at 283–287 (PESPR). At 284-348 (ESPRWLISQN…RTPQIRKHTC (65 aa)) the chain is on the cytoplasmic side. Residues 349 to 369 (ILMYNWFTSSVLYQGLIMHLG) traverse the membrane as a helical segment. Residues 370 to 374 (LAGGD) lie on the Extracellular side of the membrane. The helical transmembrane segment at 375–395 (IYLDFFYSALVEFPAAFLIIA) threads the bilayer. Residues 396–403 (TIDRVGRR) are Cytoplasmic-facing. The chain crosses the membrane as a helical span at residues 404-424 (YPWAVSNMVAGAACLASVFVP). Residues 425-427 (DDL) are Extracellular-facing. Residues 428–450 (QGLRITVACLGRMGITMAYEMVC) traverse the membrane as a helical segment. The Cytoplasmic portion of the chain corresponds to 451 to 463 (LVNAELYPTFIRN). Residues 464 to 484 (LGVLVCSSLCDVGGIVTPFLV) traverse the membrane as a helical segment. At 485–493 (YRLTAIWLQ) the chain is on the extracellular side. Residues 494–514 (LPLVVFAVVGLVAGGLVLMLP) form a helical membrane-spanning segment. Residues 515-554 (ETKGRTLPETIEEAENLQRPRKNREKVIYVHVRKADGPLT) lie on the Cytoplasmic side of the membrane.

Belongs to the major facilitator (TC 2.A.1) superfamily. Organic cation transporter (TC 2.A.1.19) family. Tyrosine phosphorylated. Expressed in kidney.

The protein localises to the basolateral cell membrane. It is found in the basal cell membrane. The enzyme catalyses (R)-noradrenaline(out) = (R)-noradrenaline(in). It carries out the reaction (R)-adrenaline(out) = (R)-adrenaline(in). The catalysed reaction is serotonin(out) = serotonin(in). It catalyses the reaction dopamine(out) = dopamine(in). The enzyme catalyses histamine(out) = histamine(in). It carries out the reaction thiamine(in) = thiamine(out). The catalysed reaction is creatinine(in) = creatinine(out). It catalyses the reaction 1-methylnicotinamide(out) = 1-methylnicotinamide(in). The enzyme catalyses guanidine(out) = guanidine(in). It carries out the reaction choline(out) = choline(in). The catalysed reaction is agmatine(out) = agmatine(in). It catalyses the reaction putrescine(out) = putrescine(in). The enzyme catalyses spermidine(in) = spermidine(out). It carries out the reaction tyramine(in) = tyramine(out). The catalysed reaction is L-histidyl-L-proline diketopiperazine(in) = L-histidyl-L-proline diketopiperazine(out). It catalyses the reaction (R)-salsolinol(in) = (R)-salsolinol(out). The enzyme catalyses N-methyl-(R)-salsolinol(in) = N-methyl-(R)-salsolinol(out). It carries out the reaction acetylcholine(in) = acetylcholine(out). The catalysed reaction is prostaglandin F2alpha(out) = prostaglandin F2alpha(in). It catalyses the reaction prostaglandin E2(out) = prostaglandin E2(in). With respect to regulation, tyrosine phosphorylation of the transporter leads to activation of the transport activity. Inhibited by cGMP, most likely through a cGMP-binding protein that interacts with OCT2. In terms of biological role, electrogenic voltage-dependent transporter that mediates the transport of a variety of organic cations such as endogenous bioactive amines, cationic drugs and xenobiotics. Functions as a Na(+)-independent, bidirectional uniporter. Cation cellular uptake or release is driven by the electrochemical potential, i.e. membrane potential and concentration gradient. However, may also engage electroneutral cation exchange when saturating concentrations of cation substrates are reached. Predominantly expressed at the basolateral membrane of hepatocytes and proximal tubules and involved in the uptake and disposition of cationic compounds by hepatic and renal clearance from the blood flow. Implicated in monoamine neurotransmitters uptake such as histamine, dopamine, adrenaline/epinephrine, noradrenaline/norepinephrine, serotonin and tyramine, thereby supporting a physiological role in the central nervous system by regulating interstitial concentrations of neurotransmitters. Also capable of transporting dopaminergic neuromodulators cyclo(his-pro), salsolinol and N-methyl-salsolinol, thereby involved in the maintenance of dopaminergic cell integrity in the central nervous system. Mediates the bidirectional transport of acetylcholine (ACh) at the apical membrane of ciliated cell in airway epithelium, thereby playing a role in luminal release of ACh from bronchial epithelium. Also transports guanidine and endogenous monoamines such as vitamin B1/thiamine, creatinine and N-1-methylnicotinamide (NMN). Mediates the uptake and efflux of quaternary ammonium compound choline. Mediates the bidirectional transport of polyamine agmatine and the uptake of polyamines putrescine and spermidine. Able to transport non-amine endogenous compounds such as prostaglandin E2 (PGE2) and prostaglandin F2-alpha (PGF2-alpha). Also involved in the uptake of xenobiotic 4-(4-(dimethylamino)styryl)-N-methylpyridinium (ASP). May contribute to regulate the transport of organic compounds in testis across the blood-testis-barrier. This chain is Solute carrier family 22 member 2 (SLC22A2), found in Oryctolagus cuniculus (Rabbit).